Reading from the N-terminus, the 945-residue chain is Netrin receptor UNC5B (945 aa).

Positions 1 to 26 (MRARSGVRSALLLALLLCWDPTPSLA) are cleaved as a signal peptide. Topologically, residues 27-377 (GVDSAGQVLP…LETSGDVALY (351 aa)) are extracellular. In terms of domain architecture, Ig-like spans 48–145 (PYFLLEPQDA…SGTTKSRRAY (98 aa)). Cystine bridges form between C69–C130, C81–C128, C174–C225, C258–C295, C262–C299, C273–C285, C314–C348, C318–C353, and C326–C338. The region spanning 153-242 (KNFDQEPLAK…KRRSTTATVI (90 aa)) is the Ig-like C2-type domain. N222 carries N-linked (GlcNAc...) asparagine glycosylation. TSP type-1 domains are found at residues 246–300 (NGGW…TVCP) and 302–354 (DGAW…GLCV). An N-linked (GlcNAc...) asparagine glycan is attached at N347. Residues 378 to 398 (AGLVVAVFVVVAVLMAVGVIV) traverse the membrane as a helical segment. Residues 399–945 (YRRNCRDFDT…LVAMATDGDC (547 aa)) lie on the Cytoplasmic side of the membrane. C403 carries the S-palmitoyl cysteine lipid modification. Residues 543-686 (SSVSGTFGCL…LGTYVFMGES (144 aa)) form the ZU5 domain. A Phosphotyrosine modification is found at Y581. Residues 689-838 (RSAVKRLQLA…AETPAGSLDA (150 aa)) are UPA domain. Residues 707 to 725 (SLEYSLRVYCLEDTPVALK) form an interaction with DCC region. In terms of domain architecture, Death spans 865-943 (KICSSLDAPN…EMLVAMATDG (79 aa)).

The protein belongs to the unc-5 family. Interacts with the cytoplasmic part of DCC. Interacts with GNAI2 via its cytoplasmic part. Interacts (via death domain) with DAPK1 (via death domain). Interacts (via extracellular domain) with FLRT2 and FLRT3 (via extracellular domain), but has higher affinity for FLRT3. Identified in a complex with FLRT3 and ADGRL3; does not interact with ADGRL3 by itself. Phosphorylated on cytoplasmic tyrosine residues. Post-translationally, palmitoylation is required for pro-apoptotic activity, but not for location at lipid rafts. In terms of processing, proteolytically cleaved by caspases during apoptosis. The cleavage does not take place when the receptor is associated with netrin ligand. Its cleavage by caspases is required to induce apoptosis. Highly expressed in brain. Expressed in lung during late development. Expressed during early blood vessel formation, in the semicircular canal and in a dorsal to ventral gradient in the retina.

It is found in the cell membrane. The protein resides in the membrane raft. In terms of biological role, receptor for netrin required for axon guidance. Mediates axon repulsion of neuronal growth cones in the developing nervous system upon ligand binding. Axon repulsion in growth cones may be caused by its association with DCC that may trigger signaling for repulsion. Functions as a netrin receptor that negatively regulates vascular branching during angiogenesis. Mediates retraction of tip cell filopodia on endothelial growth cones in response to netrin. It also acts as a dependence receptor required for apoptosis induction when not associated with netrin ligand. Mediates apoptosis by activating DAPK1. In the absence of NTN1, activates DAPK1 by reducing its autoinhibitory phosphorylation at Ser-308 thereby increasing its catalytic activity. This chain is Netrin receptor UNC5B (Unc5b), found in Mus musculus (Mouse).